The chain runs to 500 residues: Trans-cinnamate 4-monooxygenase (500 aa).

Residues 3-23 form a helical membrane-spanning segment; sequence ALLVEKVLLGLFVAAVLALVV. (E)-cinnamate contacts are provided by residues 213 to 218 and Ala-302; that span reads RSRLSQ. Residue Cys-442 coordinates heme.

The protein belongs to the cytochrome P450 family. Requires heme as cofactor. As to expression, expressed in roots and leaves.

Its subcellular location is the membrane. The enzyme catalyses (E)-cinnamate + reduced [NADPH--hemoprotein reductase] + O2 = (E)-4-coumarate + oxidized [NADPH--hemoprotein reductase] + H2O + H(+). Its pathway is phenylpropanoid metabolism; trans-4-coumarate biosynthesis; trans-4-coumarate from trans-cinnamate: step 1/1. Functionally, catalyzes the first oxidative step of the phenylpropanoid pathway in higher plants by transforming trans-cinnamate into p-coumarate. The compounds formed by this pathway are essential components for lignification, pollination, and defense against ultraviolet light, predators and pathogens. In Oryza sativa subsp. japonica (Rice), this protein is Trans-cinnamate 4-monooxygenase.